Consider the following 166-residue polypeptide: NAD(P)H-quinone oxidoreductase subunit I, chloroplastic (166 aa).

2 consecutive 4Fe-4S ferredoxin-type domains span residues 55–84 (GRIH…VDWK) and 95–124 (LNYS…MTEE). Cys64, Cys67, Cys70, Cys74, Cys104, Cys107, Cys110, and Cys114 together coordinate [4Fe-4S] cluster.

It belongs to the complex I 23 kDa subunit family. NDH is composed of at least 16 different subunits, 5 of which are encoded in the nucleus. [4Fe-4S] cluster serves as cofactor.

The protein resides in the plastid. Its subcellular location is the chloroplast thylakoid membrane. It catalyses the reaction a plastoquinone + NADH + (n+1) H(+)(in) = a plastoquinol + NAD(+) + n H(+)(out). It carries out the reaction a plastoquinone + NADPH + (n+1) H(+)(in) = a plastoquinol + NADP(+) + n H(+)(out). In terms of biological role, NDH shuttles electrons from NAD(P)H:plastoquinone, via FMN and iron-sulfur (Fe-S) centers, to quinones in the photosynthetic chain and possibly in a chloroplast respiratory chain. The immediate electron acceptor for the enzyme in this species is believed to be plastoquinone. Couples the redox reaction to proton translocation, and thus conserves the redox energy in a proton gradient. The polypeptide is NAD(P)H-quinone oxidoreductase subunit I, chloroplastic (Ambrosia trifida (Giant ragweed)).